Reading from the N-terminus, the 471-residue chain is Arginine biosynthesis bifunctional protein ArgJ, mitochondrial (471 aa).

Substrate contacts are provided by T190, K216, T239, E327, N466, and S471. T239 serves as the catalytic Nucleophile.

Belongs to the ArgJ family. As to quaternary structure, heterodimer of an alpha and a beta chain. The alpha and beta chains are autoproteolytically processed from a single precursor protein within the mitochondrion.

It localises to the mitochondrion matrix. It catalyses the reaction N(2)-acetyl-L-ornithine + L-glutamate = N-acetyl-L-glutamate + L-ornithine. The enzyme catalyses L-glutamate + acetyl-CoA = N-acetyl-L-glutamate + CoA + H(+). It functions in the pathway amino-acid biosynthesis; L-arginine biosynthesis; L-ornithine and N-acetyl-L-glutamate from L-glutamate and N(2)-acetyl-L-ornithine (cyclic): step 1/1. The protein operates within amino-acid biosynthesis; L-arginine biosynthesis; N(2)-acetyl-L-ornithine from L-glutamate: step 1/4. Its function is as follows. Catalyzes two activities which are involved in the cyclic version of arginine biosynthesis: the synthesis of acetylglutamate from glutamate and acetyl-CoA, and of ornithine by transacetylation between acetylornithine and glutamate. The polypeptide is Arginine biosynthesis bifunctional protein ArgJ, mitochondrial (Coprinopsis cinerea (strain Okayama-7 / 130 / ATCC MYA-4618 / FGSC 9003) (Inky cap fungus)).